Reading from the N-terminus, the 222-residue chain is Probable GTP-binding protein EngB (222 aa).

Residues Thr22 to Gly197 form the EngB-type G domain. Mg(2+)-binding residues include Ser37 and Thr59. The tract at residues Arg201–Ser222 is disordered. Basic and acidic residues predominate over residues Asp212–Ser222.

This sequence belongs to the TRAFAC class TrmE-Era-EngA-EngB-Septin-like GTPase superfamily. EngB GTPase family. Requires Mg(2+) as cofactor.

Functionally, necessary for normal cell division and for the maintenance of normal septation. This is Probable GTP-binding protein EngB from Laribacter hongkongensis (strain HLHK9).